A 429-amino-acid chain; its full sequence is UDP-N-acetylglucosamine 1-carboxyvinyltransferase (429 aa).

Phosphoenolpyruvate is bound at residue 22–23 (KN). R102 lines the UDP-N-acetyl-alpha-D-glucosamine pocket. C126 (proton donor) is an active-site residue. C126 bears the 2-(S-cysteinyl)pyruvic acid O-phosphothioketal mark. UDP-N-acetyl-alpha-D-glucosamine-binding positions include 171 to 174 (KVSV), D316, and I338.

This sequence belongs to the EPSP synthase family. MurA subfamily.

Its subcellular location is the cytoplasm. It catalyses the reaction phosphoenolpyruvate + UDP-N-acetyl-alpha-D-glucosamine = UDP-N-acetyl-3-O-(1-carboxyvinyl)-alpha-D-glucosamine + phosphate. It participates in cell wall biogenesis; peptidoglycan biosynthesis. In terms of biological role, cell wall formation. Adds enolpyruvyl to UDP-N-acetylglucosamine. The sequence is that of UDP-N-acetylglucosamine 1-carboxyvinyltransferase from Azorhizobium caulinodans (strain ATCC 43989 / DSM 5975 / JCM 20966 / LMG 6465 / NBRC 14845 / NCIMB 13405 / ORS 571).